The chain runs to 295 residues: Nucleotide-binding protein PEPE_0450 (295 aa).

Residue 12 to 19 (GMSGAGKT) participates in ATP binding. 62–65 (DLRS) contributes to the GTP binding site.

It belongs to the RapZ-like family.

In terms of biological role, displays ATPase and GTPase activities. The chain is Nucleotide-binding protein PEPE_0450 from Pediococcus pentosaceus (strain ATCC 25745 / CCUG 21536 / LMG 10740 / 183-1w).